The sequence spans 105 residues: BLOC-1-related complex subunit 7 (105 aa).

Belongs to the BORCS7 family. As to quaternary structure, component of the BLOC-one-related complex (BORC) which is composed of BLOC1S1, BLOC1S2, BORCS5, BORCS6, BORCS7, BORCS8, KXD1 and SNAPIN.

The protein resides in the lysosome membrane. Its function is as follows. As part of the BORC complex may play a role in lysosomes movement and localization at the cell periphery. Associated with the cytosolic face of lysosomes, the BORC complex may recruit ARL8B and couple lysosomes to microtubule plus-end-directed kinesin motor. This Bos taurus (Bovine) protein is BLOC-1-related complex subunit 7.